A 223-amino-acid chain; its full sequence is UPF0441 protein YgiB (223 aa).

The segment covering T178–T195 has biased composition (low complexity). The segment at T178–G223 is disordered. Residues A204–G223 are compositionally biased toward polar residues.

This sequence belongs to the UPF0441 family.

This Shigella dysenteriae serotype 1 (strain Sd197) protein is UPF0441 protein YgiB.